We begin with the raw amino-acid sequence, 197 residues long: Peptidoglycan-recognition protein 1 (197 aa).

Residues 1–23 form the signal peptide; sequence MKLATITFFLLTEIFFYISYAEA. 2 cysteine pairs are disulfide-bonded: Cys-31-Cys-154 and Cys-68-Cys-74. The N-acetylmuramoyl-L-alanine amidase domain maps to 53–180; that stretch reads KPLERVVIHH…RNVKATKSPG (128 aa).

Belongs to the N-acetylmuramoyl-L-alanine amidase 2 family. Localizes to plasma (at protein level).

The protein resides in the secreted. Functionally, peptidoglycan-recognition protein probably involved in innate immunity by binding to peptidoglycans (PGN) of bacteria and activating the prophenoloxidase (proPO) cascade immune response. Binds to 1,3-beta-D-glucan and PGN. This is Peptidoglycan-recognition protein 1 (PGRP-1) from Holotrichia diomphalia (Korean black chafer).